The following is a 142-amino-acid chain: Putative 2'-deoxynucleoside 5'-phosphate N-hydrolase 1 (142 aa).

Substrate-binding positions include 4–10 (FFSGSIR), tyrosine 19, histidine 36, glutamate 82, and 106–108 (SAM).

It belongs to the 2'-deoxynucleoside 5'-phosphate N-hydrolase 1 family. Monomer and homodimer.

The enzyme catalyses a pyrimidine 2'-deoxyribonucleoside 5'-phosphate + H2O = a pyrimidine nucleobase + 2-deoxy-D-ribose 5-phosphate. The catalysed reaction is a purine 2'-deoxyribonucleoside 5'-phosphate + H2O = a purine nucleobase + 2-deoxy-D-ribose 5-phosphate. Catalyzes the cleavage of the N-glycosidic bond of deoxyribonucleoside 5'-monophosphates to yield deoxyribose 5-phosphate and a purine or pyrimidine base. This is Putative 2'-deoxynucleoside 5'-phosphate N-hydrolase 1 from Syntrophotalea carbinolica (strain DSM 2380 / NBRC 103641 / GraBd1) (Pelobacter carbinolicus).